The following is a 101-amino-acid chain: Small ribosomal subunit protein uS14 (101 aa).

This sequence belongs to the universal ribosomal protein uS14 family. As to quaternary structure, part of the 30S ribosomal subunit. Contacts proteins S3 and S10.

Binds 16S rRNA, required for the assembly of 30S particles and may also be responsible for determining the conformation of the 16S rRNA at the A site. This Xylella fastidiosa (strain 9a5c) protein is Small ribosomal subunit protein uS14.